Here is a 471-residue protein sequence, read N- to C-terminus: Indole-3-acetate beta-glucosyltransferase (471 aa).

The Proton acceptor role is filled by His-15. His-15 contacts an anthocyanidin. Catalysis depends on Asp-107, which acts as the Charge relay. UDP-alpha-D-glucose is bound by residues Thr-129, Gln-344, His-359, Trp-362, Asn-363, Ser-364, Glu-367, Asp-383, and Gln-384.

This sequence belongs to the UDP-glycosyltransferase family.

The catalysed reaction is (indol-3-yl)acetate + UDP-alpha-D-glucose = 1-O-(indol-3-ylacetyl)-beta-D-glucose + UDP. Its pathway is plant hormone metabolism; auxin conjugation. The polypeptide is Indole-3-acetate beta-glucosyltransferase (IAGLU) (Zea mays (Maize)).